The primary structure comprises 430 residues: Serine--tRNA ligase (430 aa).

Residue threonine 235–glutamate 237 coordinates L-serine. Residues arginine 266–glutamate 268 and valine 282 each bind ATP. L-serine is bound at residue glutamate 289. Glutamate 353–serine 356 lines the ATP pocket. Serine 389 contributes to the L-serine binding site.

The protein belongs to the class-II aminoacyl-tRNA synthetase family. Type-1 seryl-tRNA synthetase subfamily. Homodimer. The tRNA molecule binds across the dimer.

It localises to the cytoplasm. It catalyses the reaction tRNA(Ser) + L-serine + ATP = L-seryl-tRNA(Ser) + AMP + diphosphate + H(+). It carries out the reaction tRNA(Sec) + L-serine + ATP = L-seryl-tRNA(Sec) + AMP + diphosphate + H(+). It participates in aminoacyl-tRNA biosynthesis; selenocysteinyl-tRNA(Sec) biosynthesis; L-seryl-tRNA(Sec) from L-serine and tRNA(Sec): step 1/1. Its function is as follows. Catalyzes the attachment of serine to tRNA(Ser). Is also able to aminoacylate tRNA(Sec) with serine, to form the misacylated tRNA L-seryl-tRNA(Sec), which will be further converted into selenocysteinyl-tRNA(Sec). The sequence is that of Serine--tRNA ligase from Chlorobium phaeovibrioides (strain DSM 265 / 1930) (Prosthecochloris vibrioformis (strain DSM 265)).